A 120-amino-acid chain; its full sequence is Ribonuclease P protein component (120 aa).

This sequence belongs to the RnpA family. As to quaternary structure, consists of a catalytic RNA component (M1 or rnpB) and a protein subunit.

It carries out the reaction Endonucleolytic cleavage of RNA, removing 5'-extranucleotides from tRNA precursor.. RNaseP catalyzes the removal of the 5'-leader sequence from pre-tRNA to produce the mature 5'-terminus. It can also cleave other RNA substrates such as 4.5S RNA. The protein component plays an auxiliary but essential role in vivo by binding to the 5'-leader sequence and broadening the substrate specificity of the ribozyme. This Thioalkalivibrio sulfidiphilus (strain HL-EbGR7) protein is Ribonuclease P protein component.